Reading from the N-terminus, the 525-residue chain is Arylsulfatase G (525 aa).

Residues 1–16 (MGWLFLKVLLAGVSFS) form the signal peptide. Ca(2+) is bound by residues Asp44, Asp45, and Cys84. Cys84 (nucleophile) is an active-site residue. Cys84 bears the 3-oxoalanine (Cys) mark. The N-linked (GlcNAc...) asparagine glycan is linked to Asn117. Residue Lys137 coordinates substrate. Residue His139 is part of the active site. Residue Ser162 participates in substrate binding. Asn215 carries an N-linked (GlcNAc...) asparagine glycan. His251 serves as a coordination point for substrate. Ca(2+)-binding residues include Asp302 and Asn303. Asn356 and Asn497 each carry an N-linked (GlcNAc...) asparagine glycan.

Belongs to the sulfatase family. Ca(2+) serves as cofactor. Post-translationally, N-glycosylated. N-glycosylated with both high mannose and complex type sugars. In terms of processing, the conversion to 3-oxoalanine (also known as C-formylglycine, FGly), of a serine or cysteine residue in prokaryotes and of a cysteine residue in eukaryotes, is critical for catalytic activity. The 63-kDa precursor undergoes proteolytic processing in two steps, yielding two fragments in the first step (apparent molecular masses of 44 and 18 kDa). In the second step, the 44-kDa fragment is processed further to the 34- and 10-kDa chains. The 10-kDa chain is a cleavage product of the 44-kDa fragment but linked to the 18-kDa chain through a disulfide bridge. As to expression, widely expressed, with very low expression in brain, lung, heart and skeletal muscle.

The protein resides in the lysosome. The enzyme catalyses an aryl sulfate + H2O = a phenol + sulfate + H(+). It carries out the reaction Hydrolysis of the 3-sulfate groups of the N-sulfo-D-glucosamine 3-O-sulfate units of heparin.. Its activity is regulated as follows. Inhibited by phosphate. The phosphate forms a covalent bond with the active site 3-oxoalanine. In terms of biological role, displays arylsulfatase activity at acidic pH towards artificial substrates, such as p-nitrocatechol sulfate and also, but with a lower activity towards p-nitrophenyl sulfate and 4-methylumbelliferyl sulfate. Catalyzes the hydrolysis of the 3-sulfate groups of the N-sulfo-D-glucosamine 3-O-sulfate units of heparin. This Homo sapiens (Human) protein is Arylsulfatase G (ARSG).